A 152-amino-acid polypeptide reads, in one-letter code: Cuticle protein 64 (152 aa).

7 consecutive repeat copies span residues 27 to 30 (AAPA), 33 to 37 (AAPAV), 39 to 42 (AAPA), 86 to 89 (AAPV), 92 to 95 (AAPA), 98 to 101 (AAPA), and 127 to 130 (AAPA).

Its function is as follows. Component of the cuticle of migratory locust which contains more than 100 different structural proteins. The chain is Cuticle protein 64 from Locusta migratoria (Migratory locust).